A 214-amino-acid chain; its full sequence is Inner membrane-spanning protein YciB (214 aa).

Helical transmembrane passes span 11-31 (ILFF…VAII), 50-70 (MHII…ILQD), 81-101 (VNWG…KPII), 119-139 (LSYM…YVAY), and 149-169 (FKLF…GVYI).

It belongs to the YciB family.

Its subcellular location is the cell inner membrane. In terms of biological role, plays a role in cell envelope biogenesis, maintenance of cell envelope integrity and membrane homeostasis. The chain is Inner membrane-spanning protein YciB from Hydrogenovibrio crunogenus (strain DSM 25203 / XCL-2) (Thiomicrospira crunogena).